We begin with the raw amino-acid sequence, 632 residues long: Cell pattern formation-associated protein stuA (632 aa).

The segment covering Met1–Pro20 has biased composition (polar residues). Residues Met1 to Thr27 form a disordered region. Residues Arg128 to Pro234 form the HTH APSES-type domain. A DNA-binding region (H-T-H motif) is located at residues Gly162–Glu183. Disordered stretches follow at residues Asp246–Leu315, Gln340–Tyr386, Ala403–Pro460, and Asn473–Arg632. 4 stretches are compositionally biased toward polar residues: residues Gly254–Pro264, Met275–Gly295, Gln340–Met354, and Gly364–Gln376. Residues Pro377 to Tyr386 are compositionally biased toward low complexity. Residues Glu428–Arg438 are compositionally biased toward basic and acidic residues. Over residues Asn473 to Asp506 the composition is skewed to polar residues. The span at Ala558–Ser576 shows a compositional bias: low complexity. The nuclear localization domain stretch occupies residues Lys578–Lys604. Positions Arg579–Thr600 are enriched in basic and acidic residues.

This sequence belongs to the EFG1/PHD1/stuA family.

Its subcellular location is the nucleus. Functionally, transcription factor that regulates asexual reproduction. Binds the StuA-response elements (StRE) with the consensus sequence 5'-(A/T)CGCG(T/A)N(A/C)-3' at the promoters of target genes. Required for accurate spatial organization of the developing conidiophore. Primarily involved in the formation of the uninucleate sterigmata, which arise by budding in this multicellular structure. Required for metula and phialide formation during conidiation but is not required for dimorphic growth. This Talaromyces marneffei (Penicillium marneffei) protein is Cell pattern formation-associated protein stuA.